The chain runs to 235 residues: 7-cyano-7-deazaguanine synthase (235 aa).

9–19 (FSGGQDSTTCL) serves as a coordination point for ATP. Zn(2+)-binding residues include Cys-197, Cys-212, Cys-215, and Cys-218.

It belongs to the QueC family. Requires Zn(2+) as cofactor.

The catalysed reaction is 7-carboxy-7-deazaguanine + NH4(+) + ATP = 7-cyano-7-deazaguanine + ADP + phosphate + H2O + H(+). It functions in the pathway purine metabolism; 7-cyano-7-deazaguanine biosynthesis. Catalyzes the ATP-dependent conversion of 7-carboxy-7-deazaguanine (CDG) to 7-cyano-7-deazaguanine (preQ(0)). This Polaromonas sp. (strain JS666 / ATCC BAA-500) protein is 7-cyano-7-deazaguanine synthase.